Consider the following 341-residue polypeptide: Endoglucanase 1 (341 aa).

The N-terminal stretch at 1-16 is a signal peptide; that stretch reads MKTATLLAALSVLAGA. The propeptide occupies 17-30; sequence LAAPLAGDSALHRR. The Proton donor role is filled by glutamate 166. Catalysis depends on glutamate 275, which acts as the Nucleophile.

The protein belongs to the glycosyl hydrolase 5 (cellulase A) family.

The enzyme catalyses Endohydrolysis of (1-&gt;4)-beta-D-glucosidic linkages in cellulose, lichenin and cereal beta-D-glucans.. In terms of biological role, has endoglucanase activity on carboxymethyl-cellulose (CMC). This chain is Endoglucanase 1 (CMC1), found in Saitozyma flava (Cryptococcus flavus).